A 263-amino-acid chain; its full sequence is tRNA pseudouridine synthase A (263 aa).

Catalysis depends on Asp-51, which acts as the Nucleophile. Tyr-109 contributes to the substrate binding site.

This sequence belongs to the tRNA pseudouridine synthase TruA family. Homodimer.

The catalysed reaction is uridine(38/39/40) in tRNA = pseudouridine(38/39/40) in tRNA. Functionally, formation of pseudouridine at positions 38, 39 and 40 in the anticodon stem and loop of transfer RNAs. The sequence is that of tRNA pseudouridine synthase A from Pseudoalteromonas atlantica (strain T6c / ATCC BAA-1087).